Reading from the N-terminus, the 148-residue chain is Cysteine proteinase inhibitor 5 (148 aa).

An N-terminal signal peptide occupies residues M1–A25. The short motif at Q99–G103 is the Secondary area of contact element.

Belongs to the cystatin family. Phytocystatin subfamily.

It localises to the secreted. In terms of biological role, specific inhibitor of cysteine proteinases. Probably involved in the regulation of endogenous processes and in defense against pests and pathogens. The sequence is that of Cysteine proteinase inhibitor 5 from Oryza sativa subsp. japonica (Rice).